The primary structure comprises 439 residues: Trigger factor (439 aa).

Positions 170-255 constitute a PPIase FKBP-type domain; the sequence is GDTVVIDFDG…IHELKKLETP (86 aa).

It belongs to the FKBP-type PPIase family. Tig subfamily.

The protein resides in the cytoplasm. The enzyme catalyses [protein]-peptidylproline (omega=180) = [protein]-peptidylproline (omega=0). Its function is as follows. Involved in protein export. Acts as a chaperone by maintaining the newly synthesized protein in an open conformation. Functions as a peptidyl-prolyl cis-trans isomerase. In Oenococcus oeni (strain ATCC BAA-331 / PSU-1), this protein is Trigger factor.